A 359-amino-acid chain; its full sequence is Type-1 angiotensin II receptor (359 aa).

The Extracellular portion of the chain corresponds to 1–25 (MILNSSTEDGIKRIQDDCPKAGRHN). N4 carries N-linked (GlcNAc...) asparagine glycosylation. 2 residues coordinate angiotensin II: Q15 and D17. 2 cysteine pairs are disulfide-bonded: C18/C274 and C101/C180. A helical transmembrane segment spans residues 26-55 (YIFVMIPTLYSIIFVVGIFGNSLVVIVIYF). Residues 56–61 (YMKLKT) lie on the Cytoplasmic side of the membrane. The helical transmembrane segment at 62–89 (VASVFLLNLALADLCFLLTLPLWAVYTA) threads the bilayer. Residues 90–98 (MEYRWPFGN) lie on the Extracellular side of the membrane. A helical membrane pass occupies residues 99-125 (YLCKIASASVSFNLYASVFLLTCLSID). Over 126-141 (RYVAIVHPMKSPVRRT) the chain is Cytoplasmic. A helical membrane pass occupies residues 142 to 165 (MLMAKVTCIIIWLLAGLASLPTII). Residues 166-190 (HRNVFFIENTNITVCAFHYESQNST) lie on the Extracellular side of the membrane. R167 serves as a coordination point for angiotensin II. N176 is a glycosylation site (N-linked (GlcNAc...) asparagine). Angiotensin II is bound by residues F182, H183, and Y184. N-linked (GlcNAc...) asparagine glycosylation occurs at N188. A helical membrane pass occupies residues 191-216 (LPIGLGLTKNILGFLFPFLIILTSYT). Position 199 (K199) interacts with angiotensin II. At 217 to 239 (LIWKTLKRAYEIQKNKPRNDDIF) the chain is on the cytoplasmic side. A helical transmembrane segment spans residues 240–268 (KIIMAIVLFFFFSWVPHQIFTFLDVLIQL). The Extracellular portion of the chain corresponds to 269–278 (GIIHDCKIAD). A helical transmembrane segment spans residues 279–304 (IVDTAMPITICIAYFNNCLNPLFYGF). Residues 305–359 (LGKKFKKYFLQLLKYIPPKAKSHSSLSTKMSTLSYRPSDHGNASTKKSASCVEVE) lie on the Cytoplasmic side of the membrane. A compositionally biased stretch (polar residues) spans 335 to 352 (STLSYRPSDHGNASTKKS). The interval 335-359 (STLSYRPSDHGNASTKKSASCVEVE) is disordered. The S-palmitoyl cysteine moiety is linked to residue C355.

The protein belongs to the G-protein coupled receptor 1 family. In terms of assembly, interacts with MAS1. Interacts with ARRB1. Interacts with FLNA (via filamin repeat 21); increases PKA-mediated phosphorylation of FLNA. Post-translationally, C-terminal Ser or Thr residues may be phosphorylated. As to expression, adrenal, liver, aorta, kidney, lung, testis and heart.

The protein resides in the cell membrane. Receptor for angiotensin II, a vasoconstricting peptide, which acts as a key regulator of blood pressure and sodium retention by the kidney. The activated receptor in turn couples to G-alpha proteins G(q) (GNAQ, GNA11, GNA14 or GNA15) and thus activates phospholipase C and increases the cytosolic Ca(2+) concentrations, which in turn triggers cellular responses such as stimulation of protein kinase C. The chain is Type-1 angiotensin II receptor (AGTR1) from Canis lupus familiaris (Dog).